A 373-amino-acid chain; its full sequence is Cobalt-precorrin-5B C(1)-methyltransferase (373 aa).

The protein belongs to the CbiD family.

The catalysed reaction is Co-precorrin-5B + S-adenosyl-L-methionine = Co-precorrin-6A + S-adenosyl-L-homocysteine. Its pathway is cofactor biosynthesis; adenosylcobalamin biosynthesis; cob(II)yrinate a,c-diamide from sirohydrochlorin (anaerobic route): step 6/10. In terms of biological role, catalyzes the methylation of C-1 in cobalt-precorrin-5B to form cobalt-precorrin-6A. The chain is Cobalt-precorrin-5B C(1)-methyltransferase from Halorhodospira halophila (strain DSM 244 / SL1) (Ectothiorhodospira halophila (strain DSM 244 / SL1)).